Consider the following 209-residue polypeptide: Glycolipid transfer protein A (209 aa).

2 repeat units span residues 45–55 and 56–66. A 2 X 12 AA approximate tandem repeats region spans residues 45-66; that stretch reads IKADITGNITKIRSVYESNPTK. 48–55 contributes to the beta-D-galactosyl-(1-&gt;4)-beta-D-glucosyl-(1&lt;-&gt;1)-N-[(9Z)-octadecenoyl]-sphing-4-enine binding site; that stretch reads DITGNITK. Positions 140 and 207 each coordinate beta-D-galactosyl-(1-&gt;4)-beta-D-glucosyl-(1&lt;-&gt;1)-N-[(9Z)-octadecenoyl]-sphing-4-enine.

This sequence belongs to the GLTP family.

The protein resides in the cytoplasm. Its function is as follows. Accelerates the intermembrane transfer of various glycolipids. Catalyzes the transfer of various glycosphingolipids between membranes but does not catalyze the transfer of phospholipids. May be involved in the intracellular translocation of glucosylceramides. In Xenopus laevis (African clawed frog), this protein is Glycolipid transfer protein A (gltp-a).